A 79-amino-acid chain; its full sequence is Acyl carrier protein (79 aa).

One can recognise a Carrier domain in the interval 2 to 77; sequence SDIGERVKKI…DATKFLEKNA (76 aa). Serine 37 carries the O-(pantetheine 4'-phosphoryl)serine modification.

It belongs to the acyl carrier protein (ACP) family. In terms of processing, 4'-phosphopantetheine is transferred from CoA to a specific serine of apo-ACP by AcpS. This modification is essential for activity because fatty acids are bound in thioester linkage to the sulfhydryl of the prosthetic group.

The protein resides in the cytoplasm. Its pathway is lipid metabolism; fatty acid biosynthesis. Its function is as follows. Carrier of the growing fatty acid chain in fatty acid biosynthesis. This is Acyl carrier protein from Bradyrhizobium diazoefficiens (strain JCM 10833 / BCRC 13528 / IAM 13628 / NBRC 14792 / USDA 110).